The sequence spans 370 residues: Popeye domain-containing 2 (370 aa).

The next 2 helical transmembrane spans lie at 51–71 (ALYI…WGWL) and 78–98 (VFIW…HLIF). A disordered region spans residues 275 to 349 (PSPPGSEGGS…SGEDSTSLIL (75 aa)). Positions 283–294 (GSASSPPRGSLG) are enriched in low complexity. Composition is skewed to polar residues over residues 307-319 (NPGS…QPDQ) and 330-347 (QHWS…STSL).

It belongs to the popeye family. Expressed in the heart and, slightly, in skeletal muscle.

The protein localises to the membrane. The protein resides in the cell membrane. Its subcellular location is the sarcolemma. Its function is as follows. Important for striated muscle differentiation and cardiac morphogenesis. Is also required for cardiac conduction system development, plays a regulatory function in heart rate dynamics mediated, at least in part, through cAMP-binding. The sequence is that of Popeye domain-containing 2 from Danio rerio (Zebrafish).